The sequence spans 491 residues: Large ribosomal subunit protein mL101 (rPPR4) (491 aa).

PPR repeat units lie at residues 122 to 156, 157 to 191, 192 to 226, 228 to 262, 263 to 293, 298 to 328, 333 to 367, and 368 to 402; these read TELTYGSLLNCYCKELLTEKAEGLLNKMKELNITP, SSMSYNSLMTLYTKTGETEKVPAMIQELKAENVMP, DSYTYNVWMRALAATNDISGVERVIEEMNRDGRVA, DWTTYSNMASIYVDAGLSQKAEKALQELEMKNTQR, DFTAYQFLITLYGRLGKLTEVYRIWRSLRLA, SNVAYLNMIQVLVKLNDLPGAETLFKEWQAN, DIRIVNVLIGAYAQEGLIQKANELKEKAPRRGGKL, and NAKTWEIFMDYYVKSGDMARALECMSKAVSIGKGD.

This sequence belongs to the PPR family. P subfamily. In terms of assembly, component of the mitochondrial ribosome large subunit.

It localises to the mitochondrion. The chain is Large ribosomal subunit protein mL101 (rPPR4) from Arabidopsis thaliana (Mouse-ear cress).